The following is a 385-amino-acid chain: Effector protein hopAB3 (385 aa).

Disordered regions lie at residues 1–61 (MVGI…AGRP), 73–139 (TREW…SPLY), and 215–293 (ADSQ…PRIN). Residues 1-333 (MVGISGRAGP…INMEDLRAAL (333 aa)) are host recognition. Over residues 217 to 234 (SQQAARAPARTPPRSSVR) the composition is skewed to low complexity. Composition is skewed to polar residues over residues 245–256 (ATESSSGSNQRS) and 265–283 (MTSNQRRPSSASNASTSQR).

This sequence belongs to the HopAB family. In terms of assembly, interacts physically with plant cell Pto.

It is found in the secreted. Effector protein involved in gene-for-gene resistance in tomato plants. It is recognized by the host Pto resistance protein and elicits Pto and Prf-dependent hypersensitive response (HR) and programmed cell death (PCD), resulting in host immunity. In susceptible plants, promotes virulence, in part, by enhancing the development of disease symptoms and bacterial growth. This is Effector protein hopAB3 (hopAB3) from Pseudomonas syringae pv. maculicola.